The primary structure comprises 472 residues: GTPase HflX (472 aa).

The segment at 1 to 21 is disordered; that stretch reads MDTIDTPGEQGSQSFGNSLGA. The Hflx-type G domain occupies 230-396; the sequence is PTFALIGYTN…LMTEIIQEKS (167 aa). Residues 236 to 243, 261 to 265, 283 to 286, 349 to 352, and 374 to 376 each bind GTP; these read GYTNSGKS, FATLD, DTVG, NKVD, and SAK. Mg(2+)-binding residues include Ser243 and Thr263.

This sequence belongs to the TRAFAC class OBG-HflX-like GTPase superfamily. HflX GTPase family. As to quaternary structure, monomer. Associates with the 50S ribosomal subunit. Mg(2+) serves as cofactor.

It is found in the cytoplasm. In terms of biological role, GTPase that associates with the 50S ribosomal subunit and may have a role during protein synthesis or ribosome biogenesis. Specific for GTP. This chain is GTPase HflX, found in Chlamydia pneumoniae (Chlamydophila pneumoniae).